A 165-amino-acid chain; its full sequence is Small ribosomal subunit protein uS17c (165 aa).

The transit peptide at 1 to 57 (MSLSFSLLKPPLSSSNPNPFLHGTTTKLSLLPSFSALSLSSSPPSSSTTYTFPVIKA) directs the protein to the chloroplast. The disordered stretch occupies residues 128–165 (AVAPEGRQSSATRPKPIQAASDELGIPLESQVEGDKTV).

Component of the chloroplast small ribosomal subunit (SSU). Mature 70S chloroplast ribosomes of higher plants consist of a small (30S) and a large (50S) subunit. The 30S small subunit contains 1 molecule of ribosomal RNA (16S rRNA) and 24 different proteins. The 50S large subunit contains 3 rRNA molecules (23S, 5S and 4.5S rRNA) and 33 different proteins.

It localises to the plastid. Its subcellular location is the chloroplast. In terms of biological role, component of the chloroplast ribosome (chloro-ribosome), a dedicated translation machinery responsible for the synthesis of chloroplast genome-encoded proteins, including proteins of the transcription and translation machinery and components of the photosynthetic apparatus. This Spinacia oleracea (Spinach) protein is Small ribosomal subunit protein uS17c (RPS17).